Consider the following 173-residue polypeptide: C-phycocyanin beta subunit (173 aa).

An N4-methylasparagine modification is found at asparagine 73. Cysteine 83 and cysteine 154 together coordinate (2R,3E)-phycocyanobilin.

This sequence belongs to the phycobiliprotein family. In terms of assembly, heterodimer of an alpha and a beta subunit. Part of 2 PBS rod complexes, the conventional PBS rod and a photosystem I-specific CpcL-PBS rod. In terms of processing, contains two covalently linked bilin chromophores.

The protein resides in the cellular thylakoid membrane. Light-harvesting photosynthetic bile pigment-protein from the phycobiliprotein complex (phycobilisome, PBS). Phycocyanin is the major phycobiliprotein in the PBS rod. This is C-phycocyanin beta subunit (cpcB) from Nostoc sp. (strain PCC 7120 / SAG 25.82 / UTEX 2576).